Consider the following 317-residue polypeptide: Zinc finger protein 771 (317 aa).

A Glycyl lysine isopeptide (Lys-Gly) (interchain with G-Cter in SUMO2) cross-link involves residue Lys33. C2H2-type zinc fingers lie at residues 63–85, 91–113, 119–141, 147–169, 175–197, 203–225, 231–253, and 259–281; these read HACP…ARTH, FACT…GRTH, YQCP…RRRH, YACA…LRVH, YACP…RRTH, YACA…RRVH, HRCA…ARTH, and YPCT…RRAH.

The protein belongs to the krueppel C2H2-type zinc-finger protein family.

It is found in the nucleus. May be involved in transcriptional regulation. In Mus musculus (Mouse), this protein is Zinc finger protein 771 (Znf771).